We begin with the raw amino-acid sequence, 449 residues long: Putative F-box/LRR-repeat protein At3g44090 (449 aa).

Residues 23–77 (LASMDCLPDDLLVQILYFLPTKEAISTSLLSKRWRTLYSLVHNLDLDDYIFWHHE) form the F-box domain. LRR repeat units follow at residues 133–163 (YYNL…SLGT), 186–212 (YIWF…TIHH), 214–231 (FRPF…SVTI), 247–278 (TPNV…ELDL), 286–311 (RQVQ…HLTY), and 320–345 (SKKR…VLSG).

This chain is Putative F-box/LRR-repeat protein At3g44090, found in Arabidopsis thaliana (Mouse-ear cress).